The chain runs to 984 residues: DNA polymerase (984 aa).

Residues 804–827 (DNPGKKRKSTDDNEGPSPKRRVIT) are bipartite nuclear localization signal. Positions 939–948 (CSVKRKRDDD) are monopartite nuclear localization signal. The interval 943–969 (RKRDDDDDNDDDDDDDCDSSDSENDTQ) is disordered. The span at 947–966 (DDDDNDDDDDDDCDSSDSEN) shows a compositional bias: acidic residues.

Belongs to the DNA polymerase type-B family.

The protein localises to the host nucleus. It catalyses the reaction DNA(n) + a 2'-deoxyribonucleoside 5'-triphosphate = DNA(n+1) + diphosphate. In terms of biological role, replicates the viral genome, host DNA polymerases cannot substitute for the viral enzyme in this process. The chain is DNA polymerase (POL) from Autographa californica nuclear polyhedrosis virus (AcMNPV).